Here is a 515-residue protein sequence, read N- to C-terminus: 2-isopropylmalate synthase (515 aa).

The region spanning 4 to 266 is the Pyruvate carboxyltransferase domain; sequence IKFFDTTLRD…ETRLNLQEIK (263 aa). Residues aspartate 13, histidine 201, histidine 203, and asparagine 237 each contribute to the Mn(2+) site. The tract at residues 391-515 is regulatory domain; sequence QLSSIQVQYG…RAENEKVATS (125 aa).

It belongs to the alpha-IPM synthase/homocitrate synthase family. LeuA type 1 subfamily. Homodimer. It depends on Mn(2+) as a cofactor.

It is found in the cytoplasm. The catalysed reaction is 3-methyl-2-oxobutanoate + acetyl-CoA + H2O = (2S)-2-isopropylmalate + CoA + H(+). It participates in amino-acid biosynthesis; L-leucine biosynthesis; L-leucine from 3-methyl-2-oxobutanoate: step 1/4. Functionally, catalyzes the condensation of the acetyl group of acetyl-CoA with 3-methyl-2-oxobutanoate (2-ketoisovalerate) to form 3-carboxy-3-hydroxy-4-methylpentanoate (2-isopropylmalate). This chain is 2-isopropylmalate synthase, found in Geobacillus stearothermophilus (Bacillus stearothermophilus).